An 81-amino-acid chain; its full sequence is Neuronatin (81 aa).

It belongs to the neuronatin family.

In terms of biological role, may participate in the maintenance of segment identity in the hindbrain and pituitary development, and maturation or maintenance of the overall structure of the nervous system. May function as a regulatory subunit of ion channels. The polypeptide is Neuronatin (NNAT) (Mesocricetus auratus (Golden hamster)).